Here is a 75-residue protein sequence, read N- to C-terminus: Defensin J1-1 (75 aa).

Positions 1 to 27 are cleaved as a signal peptide; it reads MAGFSKVVATIFLMMLLVFATDMMAEA. Disulfide bonds link cysteine 30/cysteine 74, cysteine 41/cysteine 61, cysteine 47/cysteine 68, and cysteine 51/cysteine 70.

The protein belongs to the DEFL family. As to quaternary structure, monomer. In terms of tissue distribution, expressed in orange and red ripe fruit and to a lesser extent in mature, green fruit. Present in trace in young, green fruit.

The protein localises to the secreted. Functionally, plant defense peptide with antifungal activity against F.oxysporum and B.cinerea. This chain is Defensin J1-1, found in Capsicum annuum (Capsicum pepper).